Consider the following 268-residue polypeptide: Indole-3-glycerol phosphate synthase (268 aa).

It belongs to the TrpC family.

It carries out the reaction 1-(2-carboxyphenylamino)-1-deoxy-D-ribulose 5-phosphate + H(+) = (1S,2R)-1-C-(indol-3-yl)glycerol 3-phosphate + CO2 + H2O. Its pathway is amino-acid biosynthesis; L-tryptophan biosynthesis; L-tryptophan from chorismate: step 4/5. In Parafrankia sp. (strain EAN1pec), this protein is Indole-3-glycerol phosphate synthase.